Here is an 817-residue protein sequence, read N- to C-terminus: Lon protease (817 aa).

The Lon N-terminal domain maps to 44 to 239; sequence LPILPLRNTV…ETLRYMNVEL (196 aa). 390–397 serves as a coordination point for ATP; sequence GPPGVGKT. A Lon proteolytic domain is found at 626–807; it reads NDVAGVVTGL…SEVLAIALTD (182 aa). Catalysis depends on residues serine 713 and lysine 756.

This sequence belongs to the peptidase S16 family. As to quaternary structure, homohexamer. Organized in a ring with a central cavity.

Its subcellular location is the cytoplasm. It catalyses the reaction Hydrolysis of proteins in presence of ATP.. Functionally, ATP-dependent serine protease that mediates the selective degradation of mutant and abnormal proteins as well as certain short-lived regulatory proteins. Required for cellular homeostasis and for survival from DNA damage and developmental changes induced by stress. Degrades polypeptides processively to yield small peptide fragments that are 5 to 10 amino acids long. Binds to DNA in a double-stranded, site-specific manner. This chain is Lon protease, found in Flavobacterium johnsoniae (strain ATCC 17061 / DSM 2064 / JCM 8514 / BCRC 14874 / CCUG 350202 / NBRC 14942 / NCIMB 11054 / UW101) (Cytophaga johnsonae).